The chain runs to 508 residues: Photosystem II CP47 reaction center protein (508 aa).

The next 6 helical transmembrane spans lie at 21-36 (SVHI…WAGS), 101-115 (IVFS…IWHW), 140-156 (GIHL…FGAF), 203-218 (IAAG…FHLS), 237-252 (VLSS…AFVV), and 457-472 (SFAL…HGSR).

This sequence belongs to the PsbB/PsbC family. PsbB subfamily. PSII is composed of 1 copy each of membrane proteins PsbA, PsbB, PsbC, PsbD, PsbE, PsbF, PsbH, PsbI, PsbJ, PsbK, PsbL, PsbM, PsbT, PsbX, PsbY, PsbZ, Psb30/Ycf12, at least 3 peripheral proteins of the oxygen-evolving complex and a large number of cofactors. It forms dimeric complexes. Binds multiple chlorophylls. PSII binds additional chlorophylls, carotenoids and specific lipids. serves as cofactor.

Its subcellular location is the plastid. The protein localises to the chloroplast thylakoid membrane. In terms of biological role, one of the components of the core complex of photosystem II (PSII). It binds chlorophyll and helps catalyze the primary light-induced photochemical processes of PSII. PSII is a light-driven water:plastoquinone oxidoreductase, using light energy to abstract electrons from H(2)O, generating O(2) and a proton gradient subsequently used for ATP formation. This is Photosystem II CP47 reaction center protein from Helianthus annuus (Common sunflower).